The primary structure comprises 438 residues: Delta(14)-sterol reductase ERG24 (438 aa).

Over 1–13 the chain is Lumenal; sequence MVSALNPRTTEFE. A helical membrane pass occupies residues 14-34; sequence FGGLIGALGISIGLPVFTIIL. Residues 35-71 lie on the Cytoplasmic side of the membrane; sequence NQMIRPDYFIKGFFQNFDIVELWNGIKPLRYYLGNRE. Residues 72-90 form a helical membrane-spanning segment; sequence LWTVYCLWYGILAVLDVIL. At 91–109 the chain is on the lumenal side; sequence PGRVMKGVQLRDGSKLSYK. A helical transmembrane segment spans residues 110–127; the sequence is INGIAMSTTLVLVLAIRW. Residues 128–147 are Cytoplasmic-facing; the sequence is KLTDGQLPELQYLYENHVSL. A helical membrane pass occupies residues 148 to 172; the sequence is CIISILFSFFLATYCYVASFIPLIF. Over 173–242 the chain is Lumenal; the sequence is KKNGNGKREK…LHHHYLKTGK (70 aa). The chain crosses the membrane as a helical span at residues 243–263; it reads INDALVLVNFLQGFYIFDGVL. Topologically, residues 264–308 are cytoplasmic; it reads NEEGVLTMMDITTDGFGFMLAFGDLSLVPFTYSLQARYLSVSPVE. The chain crosses the membrane as a helical span at residues 309 to 328; that stretch reads LGWVKVVGILAIMFLGFHIF. Over 329 to 368 the chain is Lumenal; it reads HSANKQKSEFRQGKLENLKSIQTKRGTKLLCDGWWAKSQH. NADP(+)-binding positions include Lys335, Arg339, Leu358, Trp363, 370–371, Asp410, 414–418, and Tyr425; these read NY and CRLKY. Residues 369-387 form a helical membrane-spanning segment; that stretch reads INYFGDWLISLSWCLATWF. The Cytoplasmic segment spans residues 388-438; the sequence is QTPLTYYYSLYFATLLLHRQQRDEHKCRLKYGENWEEYERKVPYKIIPYVY.

This sequence belongs to the ERG4/ERG24 family.

It localises to the membrane. It carries out the reaction 4,4-dimethyl-5alpha-cholesta-8,24-dien-3beta-ol + NADP(+) = 4,4-dimethyl-5alpha-cholesta-8,14,24-trien-3beta-ol + NADPH + H(+). It participates in steroid biosynthesis; zymosterol biosynthesis; zymosterol from lanosterol: step 2/6. Its activity is regulated as follows. Inhibited by the morpholine antifungal drug fenpropimorph. Delta(14)-sterol reductase; part of the third module of ergosterol biosynthesis pathway that includes the late steps of the pathway. ERG24 reduces the C14=C15 double bond of 4,4-dimethyl-cholesta-8,14,24-trienol to produce 4,4-dimethyl-cholesta-8,24-dienol. The third module or late pathway involves the ergosterol synthesis itself through consecutive reactions that mainly occur in the endoplasmic reticulum (ER) membrane. Firstly, the squalene synthase ERG9 catalyzes the condensation of 2 farnesyl pyrophosphate moieties to form squalene, which is the precursor of all steroids. Squalene synthase is crucial for balancing the incorporation of farnesyl diphosphate (FPP) into sterol and nonsterol isoprene synthesis. Secondly, the squalene epoxidase ERG1 catalyzes the stereospecific oxidation of squalene to (S)-2,3-epoxysqualene, which is considered to be a rate-limiting enzyme in steroid biosynthesis. Then, the lanosterol synthase ERG7 catalyzes the cyclization of (S)-2,3 oxidosqualene to lanosterol, a reaction that forms the sterol core. In the next steps, lanosterol is transformed to zymosterol through a complex process involving various demethylation, reduction and desaturation reactions. The lanosterol 14-alpha-demethylase ERG11 (also known as CYP51) catalyzes C14-demethylation of lanosterol to produce 4,4'-dimethyl cholesta-8,14,24-triene-3-beta-ol, which is critical for ergosterol biosynthesis. The C-14 reductase ERG24 reduces the C14=C15 double bond of 4,4-dimethyl-cholesta-8,14,24-trienol to produce 4,4-dimethyl-cholesta-8,24-dienol. 4,4-dimethyl-cholesta-8,24-dienol is substrate of the C-4 demethylation complex ERG25-ERG26-ERG27 in which ERG25 catalyzes the three-step monooxygenation required for the demethylation of 4,4-dimethyl and 4alpha-methylsterols, ERG26 catalyzes the oxidative decarboxylation that results in a reduction of the 3-beta-hydroxy group at the C-3 carbon to an oxo group, and ERG27 is responsible for the reduction of the keto group on the C-3. ERG28 has a role as a scaffold to help anchor ERG25, ERG26 and ERG27 to the endoplasmic reticulum and ERG29 regulates the activity of the iron-containing C4-methylsterol oxidase ERG25. Then, the sterol 24-C-methyltransferase ERG6 catalyzes the methyl transfer from S-adenosyl-methionine to the C-24 of zymosterol to form fecosterol. The C-8 sterol isomerase ERG2 catalyzes the reaction which results in unsaturation at C-7 in the B ring of sterols and thus converts fecosterol to episterol. The sterol-C5-desaturase ERG3 then catalyzes the introduction of a C-5 double bond in the B ring to produce 5-dehydroepisterol. The C-22 sterol desaturase ERG5 further converts 5-dehydroepisterol into ergosta-5,7,22,24(28)-tetraen-3beta-ol by forming the C-22(23) double bond in the sterol side chain. Finally, ergosta-5,7,22,24(28)-tetraen-3beta-ol is substrate of the C-24(28) sterol reductase ERG4 to produce ergosterol. The protein is Delta(14)-sterol reductase ERG24 of Saccharomyces cerevisiae (strain ATCC 204508 / S288c) (Baker's yeast).